The primary structure comprises 3511 residues: Unconventional myosin-XV (3511 aa).

Disordered regions lie at residues 1-44 (MADE…TPKI), 574-690 (KKPI…SLRQ), 712-1030 (FAEP…PNKN), and 1105-1135 (VSSF…PQAC). The segment covering 622 to 634 (SQPQARNNNNSHG) has biased composition (polar residues). A compositionally biased stretch (pro residues) spans 654–672 (PPMPAPSPSPASPLTPPFS). Positions 769–792 (PSLRSLPGQGYHSPLGPLSPQLSL) are enriched in low complexity. Residues 797-807 (FQPPFPPPPRR) are compositionally biased toward pro residues. In terms of domain architecture, Myosin motor spans 1206 to 1883 (DGVEDMTQLE…LHQLLESMRE (678 aa)). Residue 1299–1306 (GESGSGKT) participates in ATP binding. Residues 1307–1334 (EATKLILRCLAAMNQRRDVMQQIKILEA) adopt a coiled-coil conformation. The segment at 1776-1783 (FVRCLKPN) is actin-binding. Positions 1872 to 2013 (EHLHQLLESM…SSGPRVAVVR (142 aa)) are neck or regulatory domain. 2 IQ domains span residues 1886–1908 (QNRA…HFRS) and 1909–1938 (LRRK…SLLK). The segment at 2014–3511 (APRLQAEPCV…TLPPSEITLL (1498 aa)) is tail. In terms of domain architecture, MyTH4 1 spans 2049–2195 (MLTVPLKMPL…PTQLEWTAIQ (147 aa)). Disordered regions lie at residues 2330-2359 (SHKE…GEST), 2392-2425 (YRMK…PIPG), 2460-2509 (PLSA…SVAK), 2565-2584 (KQPP…GKVF), and 2629-2648 (RPCM…PPED). The span at 2337 to 2351 (NGETEAQRWTSNRQA) shows a compositional bias: polar residues. A compositionally biased stretch (gly residues) spans 2395–2406 (KGGGQPGGGGGS). The segment covering 2410-2420 (DTSRRPPEPKL) has biased composition (basic and acidic residues). A compositionally biased stretch (basic and acidic residues) spans 2573–2584 (PEARRTDGGKVF). Residues 2848–2934 (KDSDYVVAVR…PSELVQPAAA (87 aa)) enclose the SH3 domain. The tract at residues 2964–2984 (EVGRRREGPPVRARSADSGED) is disordered. The segment covering 2965–2980 (VGRRREGPPVRARSAD) has biased composition (basic and acidic residues). Residues 3031-3185 (FTKVPIQESL…PSNMELRAML (155 aa)) form the MyTH4 2 domain. Positions 3190–3511 (SKRQLFLLPG…TLPPSEITLL (322 aa)) constitute an FERM domain.

This sequence belongs to the TRAFAC class myosin-kinesin ATPase superfamily. Myosin family. Interacts with the third PDZ domain of WHRN which is necessary for localization of WHRN to stereocilium tips. Interacts with FASLG. Interacts with EPS8. As to expression, in the developing inner ear, expressed in cochlea and vestibular apparatus. Expression appears to be restricted to cochlear neurosensory cells and upper epithelial layer of macula saccula. Also expressed in macula utriculi and cristae ampullaris of the semicircular canals. In adult cochlear hair cells, highest expression in stereocilia and apical body.

Its subcellular location is the cell projection. It localises to the stereocilium. The protein localises to the cytoplasm. It is found in the cytoskeleton. Its function is as follows. Myosins are actin-based motor molecules with ATPase activity. Unconventional myosins serve in intracellular movements. Their highly divergent tails are presumed to bind to membranous compartments, which would be moved relative to actin filaments. Required for the arrangement of stereocilia in mature hair bundles. The polypeptide is Unconventional myosin-XV (Myo15a) (Mus musculus (Mouse)).